Here is a 153-residue protein sequence, read N- to C-terminus: Aspartate carbamoyltransferase regulatory chain (153 aa).

Positions 109, 114, 138, and 141 each coordinate Zn(2+).

It belongs to the PyrI family. Contains catalytic and regulatory chains. Zn(2+) serves as cofactor.

Functionally, involved in allosteric regulation of aspartate carbamoyltransferase. This chain is Aspartate carbamoyltransferase regulatory chain, found in Vibrio campbellii (strain ATCC BAA-1116).